A 128-amino-acid chain; its full sequence is Ribosome-binding factor A (128 aa).

Belongs to the RbfA family. In terms of assembly, monomer. Binds 30S ribosomal subunits, but not 50S ribosomal subunits or 70S ribosomes.

It is found in the cytoplasm. Its function is as follows. One of several proteins that assist in the late maturation steps of the functional core of the 30S ribosomal subunit. Associates with free 30S ribosomal subunits (but not with 30S subunits that are part of 70S ribosomes or polysomes). Required for efficient processing of 16S rRNA. May interact with the 5'-terminal helix region of 16S rRNA. This Pseudomonas paraeruginosa (strain DSM 24068 / PA7) (Pseudomonas aeruginosa (strain PA7)) protein is Ribosome-binding factor A.